The chain runs to 740 residues: F-BAR and double SH3 domains protein 2 (740 aa).

Residues 8–282 enclose the F-BAR domain; that stretch reads VKVTQELKNI…NSSKVVRDYN (275 aa). Residues 303–323 are disordered; the sequence is PCDSDTSRQLESETGTTEEHS. Residues 307-323 are compositionally biased toward basic and acidic residues; that stretch reads DTSRQLESETGTTEEHS. The stretch at 356–397 forms a coiled coil; the sequence is GAAVSEQSRAELEQKIDEARENIRKAEIIKLKAEARLDLLKQ. 2 consecutive SH3 domains span residues 469–530 and 567–629; these read NYPL…FPTS and ASVC…ELSA. The interval 567 to 629 is required and sufficient for location at clathrin-coated pits; the sequence is ASVCFVKALY…PSVLVEELSA (63 aa). Residues 633 to 740 form a disordered region; that stretch reads GDTPWMREIQ…KIEDVEITLV (108 aa). Over residues 646 to 657 the composition is skewed to pro residues; that stretch reads SPKPHASLPPLP. S675 and S681 each carry phosphoserine.

In terms of assembly, homodimer. Interacts (via SH3 domain 2) with ITSN1 (via SH3 domain 4). Recruited to clathrin-coated pits during a mid-to-late stage of assembly via interaction with ITSN1. Interacts (via SH3 domain 1) with WASL. Interacts with WAS. Interacts with CASK and MAGI1. CASK inhibits interaction with MAGI1. In terms of processing, phosphorylated. Phosphorylation on a Ser residue is important for recruitment to the cell membrane and for its role in promoting endocytosis. In terms of tissue distribution, liver, brain, heart, placenta, skeletal muscle, pancreas, lung and kidney.

Its subcellular location is the cytoplasm. It is found in the cell junction. It localises to the membrane. The protein resides in the clathrin-coated pit. The protein localises to the cell membrane. Its subcellular location is the cell projection. It is found in the stereocilium. Adapter protein that plays a role in endocytosis via clathrin-coated pits. Contributes to the internalization of cell surface receptors, such as integrin ITGB1 and transferrin receptor. Promotes endocytosis of EGFR in cancer cells, and thereby contributes to the down-regulation of EGFR signaling. Recruited to clathrin-coated pits during a mid-to-late stage of assembly, where it is required for normal progress from U-shaped intermediate stage pits to terminal, omega-shaped pits. Binds to membranes enriched in phosphatidylinositol 3,4-bisphosphate or phosphatidylinositol 3,4,5-trisphosphate. When bound to membranes, promotes actin polymerization via its interaction with WAS and/or WASL which leads to the activation of the Arp2/3 complex. Does not promote actin polymerisation in the absence of membranes. This Homo sapiens (Human) protein is F-BAR and double SH3 domains protein 2 (FCHSD2).